A 404-amino-acid polypeptide reads, in one-letter code: NADH-quinone oxidoreductase subunit D 2 (404 aa).

The protein belongs to the complex I 49 kDa subunit family. As to quaternary structure, NDH-1 is composed of 14 different subunits. Subunits NuoB, C, D, E, F, and G constitute the peripheral sector of the complex.

Its subcellular location is the cell inner membrane. It catalyses the reaction a quinone + NADH + 5 H(+)(in) = a quinol + NAD(+) + 4 H(+)(out). NDH-1 shuttles electrons from NADH, via FMN and iron-sulfur (Fe-S) centers, to quinones in the respiratory chain. The immediate electron acceptor for the enzyme in this species is believed to be ubiquinone. Couples the redox reaction to proton translocation (for every two electrons transferred, four hydrogen ions are translocated across the cytoplasmic membrane), and thus conserves the redox energy in a proton gradient. The polypeptide is NADH-quinone oxidoreductase subunit D 2 (Rhizobium meliloti (strain 1021) (Ensifer meliloti)).